The sequence spans 82 residues: Small ribosomal subunit protein bS18 (82 aa).

This sequence belongs to the bacterial ribosomal protein bS18 family. Part of the 30S ribosomal subunit. Forms a tight heterodimer with protein bS6.

Its function is as follows. Binds as a heterodimer with protein bS6 to the central domain of the 16S rRNA, where it helps stabilize the platform of the 30S subunit. The chain is Small ribosomal subunit protein bS18 from Bartonella bacilliformis (strain ATCC 35685 / KC583 / Herrer 020/F12,63).